Here is a 197-residue protein sequence, read N- to C-terminus: Suppressor of RNA silencing p3 (197 aa).

It belongs to the tenuiviruses p3 protein family. Homodimer.

The protein resides in the host cytoplasm. Acts as a suppressor of RNA-mediated gene silencing, also known as post-transcriptional gene silencing (PTGS), presumably through the binding of dsRNA. This Rottboellia (Sorghum) protein is Suppressor of RNA silencing p3.